A 757-amino-acid polypeptide reads, in one-letter code: Chloride anion exchanger (757 aa).

Residues 1–71 (MIEAIGNQYV…SWLPAYKIKE (71 aa)) lie on the Cytoplasmic side of the membrane. The helical transmembrane segment at 72–92 (WLLSDIVSGISTGLVAVLQGL) threads the bilayer. Residue A93 is a topological domain, extracellular. A helical transmembrane segment spans residues 94-114 (FALLVNIPPAYGLYAAFFPVI). Over 115 to 124 (TYFFLGTSRH) the chain is Cytoplasmic. Residues 125-145 (ISVGPFPVLSMMVGVVVTRVV) form a helical membrane-spanning segment. The Extracellular segment spans residues 146–176 (SDPNASSELSSSSTENDSFIEEKVMVAASVT). N-linked (GlcNAc...) asparagine glycans are attached at residues N149 and N161. Residues 177-197 (VLSGIIQLLLGVLQVGFVVIY) form a helical membrane-spanning segment. At 198–201 (LSES) the chain is on the cytoplasmic side. A helical membrane pass occupies residues 202-222 (LISGFTTAAAIHVLVSQLKFM). Topologically, residues 223-250 (LQLPVPAYSDPFSIFKVLESVFTQIQKT) are extracellular. A helical transmembrane segment spans residues 251-271 (NIADLVTSVIILVVVFVFKEI). Over 272-278 (NQRYRSK) the chain is Cytoplasmic. Residues 279–299 (LPVPIPIELIMTVIATGVSYG) traverse the membrane as a helical segment. Residues 300 to 335 (CNFEDRFGVAVVGNMSLGFQPPITPSVEVFQDTIGD) are Extracellular-facing. The chain crosses the membrane as a helical span at residues 336-356 (SFGIAIVGFAVAFSVASVYSL). At 357-367 (KYDYPIDGNQE) the chain is on the cytoplasmic side. Residues 368-388 (LIALGVSNIFTGAFKGFAGST) form a helical membrane-spanning segment. Residues 389–404 (ALSRSGVQESTGGKTQ) lie on the Extracellular side of the membrane. The chain crosses the membrane as a helical span at residues 405-425 (VAGLLSAVIVLIVIVAIGFLL). The Cytoplasmic portion of the chain corresponds to 426 to 462 (QPLQKSVLAALALGNLKGMLMQFAEIGRLWKKDKYDC). A helical membrane pass occupies residues 463–483 (LIWIMTFIFAIVLGLGLGLAA). The Extracellular segment spans residues 484–757 (SVAFQLLTIV…ECQVPVETKF (274 aa)). The region spanning 518 to 713 (NYAEVYEPEG…LTIHDAILHI (196 aa)) is the STAS domain. Positions 754 to 757 (ETKF) match the PDZ-binding motif.

Belongs to the SLC26A/SulP transporter (TC 2.A.53) family. In terms of assembly, interacts with PDZK1. Interacts with CFTR, SLC26A6 and NHERF1. Interacts (via PDZ-binding motif) with NHERF4 (via the third PDZ domain). This interaction leads to decreased expression of SLC26A3 on the cell membrane resulting in its reduced exchanger activity. N-glycosylation is required for efficient cell surface expression, and protection from proteolytic degradation. In terms of tissue distribution, expressed in spermatogenic cells. Expressed at high levels in cecum and colon and at lower levels in small intestine.

The protein localises to the apical cell membrane. It is found in the membrane. It localises to the cell membrane. It catalyses the reaction hydrogencarbonate(in) + 2 chloride(out) = hydrogencarbonate(out) + 2 chloride(in). Its function is as follows. Mediates chloride-bicarbonate exchange with a chloride bicarbonate stoichiometry of 2:1 in the intestinal epithelia. Plays a role in the chloride and bicarbonate homeostasis during sperm epididymal maturation and capacitation. The protein is Chloride anion exchanger (Slc26a3) of Mus musculus (Mouse).